The following is a 240-amino-acid chain: Glutathione S-transferase theta-1 (240 aa).

Residues 2–82 enclose the GST N-terminal domain; sequence GLELYLDLLS…YLTRKYKVPD (81 aa). Glutathione is bound by residues histidine 40, 53–54, and 66–67; these read KV and ES. Residues 88–220 enclose the GST C-terminal domain; that stretch reads DLQARARVDE…HEVILKAKDF (133 aa).

Belongs to the GST superfamily. Theta family. As to quaternary structure, homodimer. Found in erythrocyte. Expressed at low levels in liver. In lung, expressed at low levels in club cells and ciliated cells at the alveolar/bronchiolar junction. Absent from epithelial cells of larger bronchioles.

It is found in the cytoplasm. The catalysed reaction is RX + glutathione = an S-substituted glutathione + a halide anion + H(+). Its function is as follows. Conjugation of reduced glutathione to a wide number of exogenous and endogenous hydrophobic electrophiles. Acts on 1,2-epoxy-3-(4-nitrophenoxy)propane, phenethylisothiocyanate 4-nitrobenzyl chloride and 4-nitrophenethyl bromide. Displays glutathione peroxidase activity with cumene hydroperoxide. The protein is Glutathione S-transferase theta-1 (GSTT1) of Homo sapiens (Human).